The primary structure comprises 95 residues: Small ribosomal subunit protein bS18 (95 aa).

It belongs to the bacterial ribosomal protein bS18 family. Part of the 30S ribosomal subunit. Forms a tight heterodimer with protein bS6.

Its function is as follows. Binds as a heterodimer with protein bS6 to the central domain of the 16S rRNA, where it helps stabilize the platform of the 30S subunit. This is Small ribosomal subunit protein bS18 from Rickettsia typhi (strain ATCC VR-144 / Wilmington).